A 79-amino-acid polypeptide reads, in one-letter code: Sec-independent protein translocase protein TatA (79 aa).

A helical transmembrane segment spans residues 1–21 (MGGWSSPSHWLIILLIVVLLF). Positions 52 to 61 (KNTQKIEENK) are enriched in basic and acidic residues. Positions 52-79 (KNTQKIEENKNTTNNTSADASIDKTKKA) are disordered.

Belongs to the TatA/E family. In terms of assembly, the Tat system comprises two distinct complexes: a TatABC complex, containing multiple copies of TatA, TatB and TatC subunits, and a separate TatA complex, containing only TatA subunits. Substrates initially bind to the TatABC complex, which probably triggers association of the separate TatA complex to form the active translocon.

It is found in the cell inner membrane. Part of the twin-arginine translocation (Tat) system that transports large folded proteins containing a characteristic twin-arginine motif in their signal peptide across membranes. TatA could form the protein-conducting channel of the Tat system. This chain is Sec-independent protein translocase protein TatA, found in Campylobacter jejuni subsp. jejuni serotype O:6 (strain 81116 / NCTC 11828).